The chain runs to 569 residues: GATOR1 complex protein NPRL3 (569 aa).

2 disordered regions span residues 27–60 (PFQRSQEHPASQTNKPRSRYAVNNTGEHADDQDG) and 441–476 (TPNALSFGSPTSSDDMTLTSPSMDNSSAELLPSGDS). 2 stretches are compositionally biased toward polar residues: residues 34–52 (HPASQTNKPRSRYAVNNTG) and 441–468 (TPNALSFGSPTSSDDMTLTSPSMDNSSA). Residue S476 is modified to Phosphoserine.

It belongs to the NPR3 family. As to quaternary structure, within the GATOR complex, component of the GATOR1 subcomplex, made of DEPDC5, NPRL2 and NPRL3. GATOR1 mediates the strong interaction of the GATOR complex with small GTPases Rag (RagA/RRAGA, RagB/RRAGB, RagC/RRAGC and/or RagD/RRAGD) heterodimers. GATOR1 interacts with GPR155/LYCHOS; interaction takes place in presence of cholesterol and prevents interaction between GATOR1 and KICSTOR.

The protein localises to the lysosome membrane. In terms of biological role, as a component of the GATOR1 complex functions as an inhibitor of the amino acid-sensing branch of the mTORC1 pathway. In response to amino acid depletion, the GATOR1 complex has GTPase activating protein (GAP) activity and strongly increases GTP hydrolysis by RagA/RRAGA (or RagB/RRAGB) within heterodimeric Rag complexes, thereby turning them into their inactive GDP-bound form, releasing mTORC1 from lysosomal surface and inhibiting mTORC1 signaling. In the presence of abundant amino acids, the GATOR1 complex is negatively regulated by GATOR2, the other GATOR subcomplex, in this amino acid-sensing branch of the TORC1 pathway. The protein is GATOR1 complex protein NPRL3 of Mus musculus (Mouse).